A 507-amino-acid polypeptide reads, in one-letter code: Acetylcholine receptor subunit beta-type lev-1 (507 aa).

The signal sequence occupies residues 1–31 (MMLGGGGGCGAGGTWLGFLVFLAVSLRNHST). N-linked (GlcNAc...) asparagine glycans are attached at residues Asn-28, Asn-58, and Asn-109. Over 32 to 138 (CEDIDAEDRL…NNADGNYEVS (107 aa)) the chain is Extracellular. The chain crosses the membrane as a helical span at residues 139–159 (FMCNVLILSTGTVLWVPPAIY). Cys-163 and Cys-177 form a disulfide bridge. 3 helical membrane passes run 243-263 (VVLI…FYLP), 271-291 (GLTM…SKIL), and 305-325 (LLLT…ICNI). The disordered stretch occupies residues 373–392 (GPSVEENPMRSGEHHPLCRH). Residues 379-392 (NPMRSGEHHPLCRH) are compositionally biased toward basic and acidic residues. The chain crosses the membrane as a helical span at residues 454–474 (FLLYGFFGATVGGTIGIIFTA).

Belongs to the ligand-gated ion channel (TC 1.A.9) family. Acetylcholine receptor (TC 1.A.9.1) subfamily. Interacts with unc-29. Component of nicotinic acetylcholine receptor composed of 2 non-alpha subunits lev-1 and unc-29, and 3 alpha subunits unc-38, unc-63 and lev-8.

The protein resides in the postsynaptic cell membrane. It is found in the cell membrane. Its function is as follows. Non-alpha subunit of nicotinic acetylcholine receptor (nAChR). Involved in nAChR sensitivity to nicotine. In Caenorhabditis elegans, this protein is Acetylcholine receptor subunit beta-type lev-1 (lev-1).